The sequence spans 205 residues: MPSKKKKYNARFPPARIKKIMQTDEEIGKVAAAVPVIISRALELFLESLLKKACQVTQSRNAKTMTTSHLKQCIELEQQFDFLKDLVASVPDMQGDGEDNHTDGDKGPRRGRKPGSSGRKNGGTGSKSKDKKLSGTDSEQEDESEDTDTDGEEETPQAPPQASHPPAHFQSPPTPFMPFTSPLPLPPAPPGPSAPEAEDEEDYDS.

A Histone-fold domain is found at 14–77 (PARIKKIMQT…SHLKQCIELE (64 aa)). Residues 91–205 (PDMQGDGEDN…EAEDEEDYDS (115 aa)) are disordered. The segment covering 98–108 (EDNHTDGDKGP) has biased composition (basic and acidic residues). The segment covering 138-155 (SEQEDESEDTDTDGEEET) has biased composition (acidic residues). Residues 172–193 (PPTPFMPFTSPLPLPPAPPGPS) are compositionally biased toward pro residues. Over residues 196-205 (EAEDEEDYDS) the composition is skewed to acidic residues.

Belongs to the NC2 alpha/DRAP1 family. Heterodimer with DR1. Binds BTAF1. Post-translationally, phosphorylation reduces DNA binding, but has no effect on heterodimerization and TBP binding.

The protein resides in the nucleus. In terms of biological role, the association of the DR1/DRAP1 heterodimer with TBP results in a functional repression of both activated and basal transcription of class II genes. This interaction precludes the formation of a transcription-competent complex by inhibiting the association of TFIIA and/or TFIIB with TBP. Can bind to DNA on its own. In Rattus norvegicus (Rat), this protein is Dr1-associated corepressor.